Reading from the N-terminus, the 961-residue chain is Ubiquitin carboxyl-terminal hydrolase 4 (961 aa).

The region spanning 11–122 is the DUSP domain; the sequence is PDVETQKTEL…GQQPIVRKVV (112 aa). The segment at 27–216 is necessary for interaction with SART3; it reads TLQRGAQWYL…LYQGQVLVIE (190 aa). A Nuclear export signal motif is present at residues 133 to 141; it reads VEVYLLELK. Residues 142–226 enclose the Ubiquitin-like 1 domain; sequence LCENSDPTNV…PQNEDGTWPR (85 aa). A disordered region spans residues 219–257; the sequence is NEDGTWPRQTLQSKSSTAPSRNFTTSSKPSASPYSSMSA. The span at 225-243 shows a compositional bias: polar residues; the sequence is PRQTLQSKSSTAPSRNFTT. The required for USP4 activation by providing conformational flexibility between the DUSP and catalytic domains stretch occupies residues 229-295; it reads LQSKSSTAPS…SYNCQEPPSP (67 aa). Positions 244–257 are enriched in low complexity; sequence SSKPSASPYSSMSA. Residues 302–921 enclose the USP domain; that stretch reads CGLGNLGNTC…AAYVLFYQRR (620 aa). Cys-311 is a catalytic residue. Residues 384 to 386 form a regulates ubiquitin dissociation region; the sequence is PQF. Residues 405 to 407 are necessary for interaction with RBL2; it reads LHE. Residue Ser-445 is modified to Phosphoserine. A necessary for interaction with RB1 and RBL2 region spans residues 459-463; the sequence is LVCPE. Residues Cys-461 and Cys-464 each coordinate Zn(2+). Positions 483–571 constitute a Ubiquitin-like 2 domain; sequence LKKDRIMEVF…IFVYEICTTP (89 aa). The tract at residues 485–773 is interacts with DUSP and ubiquitin-like 1 domains and is required for USP4 activation; sequence KDRIMEVFLV…SQPQKKKKAA (289 aa). The disordered stretch occupies residues 641–700; sequence SSPLEPGACNGSRGSYEGDEEEMDHQEEGKEQLSEVEESGEDSQGGDPTETTQKAKGPPR. Ser-655, Ser-674, and Ser-679 each carry phosphoserine. A Nuclear localization signal motif is present at residues 765–770; that stretch reads QPQKKK. 2 residues coordinate Zn(2+): Cys-797 and Cys-800. The active site involves His-879. Residues 924-961 are disordered; the sequence is ECPSTSSPVSFPGSDGGAKLSSSQQDLGEEEAYTMDTN. Over residues 950–961 the composition is skewed to acidic residues; that stretch reads LGEEEAYTMDTN.

Belongs to the peptidase C19 family. USP4 subfamily. As to quaternary structure, interacts with RB1 (both dephosphorylated and hypophosphorylated forms). Interacts with RBL1 and RBL2. Interacts with ADORA2A (via cytoplasmic C-terminus); the interaction is direct. Interacts with SART3; recruits USP4 to its substrate PRPF3. In terms of processing, phosphorylated at Ser-445 by PKB/AKT1 in response to EGF stimulus, promoting its ability deubiquitinate RHEB. Post-translationally, monoubiquitinated by TRIM21. Ubiquitination does not lead to its proteasomal degradation. Autodeubiquitinated. In terms of tissue distribution, expressed in hippocampus and striatum (at protein level).

It localises to the cytoplasm. Its subcellular location is the nucleus. The enzyme catalyses Thiol-dependent hydrolysis of ester, thioester, amide, peptide and isopeptide bonds formed by the C-terminal Gly of ubiquitin (a 76-residue protein attached to proteins as an intracellular targeting signal).. Its activity is regulated as follows. The completion of the deubiquitinase reaction is mediated by the DUSP and ubiquitin-like 1 domains which promotes the release of ubiquitin from the catalytic site enabling subsequent reactions to occur. In terms of biological role, deubiquitinating enzyme that removes conjugated ubiquitin from target proteins. Deubiquitinates PDPK1. Deubiquitinates TRIM21. Deubiquitinates receptor ADORA2A which increases the amount of functional receptor at the cell surface. Deubiquitinates HAS2. Deubiquitinates RHEB in response to EGF signaling, promoting mTORC1 signaling. May regulate mRNA splicing through deubiquitination of the U4 spliceosomal protein PRPF3. This may prevent its recognition by the U5 component PRPF8 thereby destabilizing interactions within the U4/U6.U5 snRNP. May also play a role in the regulation of quality control in the ER. The sequence is that of Ubiquitin carboxyl-terminal hydrolase 4 (Usp4) from Rattus norvegicus (Rat).